Consider the following 125-residue polypeptide: Small ribosomal subunit protein uS13 (125 aa).

A disordered region spans residues 90–125 (TRHRRGLPVRGQRTHTNARTKKGPRRAIAGKKKVTK).

Belongs to the universal ribosomal protein uS13 family. Part of the 30S ribosomal subunit. Forms a loose heterodimer with protein S19. Forms two bridges to the 50S subunit in the 70S ribosome.

In terms of biological role, located at the top of the head of the 30S subunit, it contacts several helices of the 16S rRNA. In the 70S ribosome it contacts the 23S rRNA (bridge B1a) and protein L5 of the 50S subunit (bridge B1b), connecting the 2 subunits; these bridges are implicated in subunit movement. Contacts the tRNAs in the A and P-sites. The protein is Small ribosomal subunit protein uS13 of Gemmatimonas aurantiaca (strain DSM 14586 / JCM 11422 / NBRC 100505 / T-27).